The primary structure comprises 175 residues: ATP-dependent protease subunit HslV (175 aa).

Thr-2 is an active-site residue. Na(+) is bound by residues Ala-156, Cys-159, and Thr-162.

Belongs to the peptidase T1B family. HslV subfamily. In terms of assembly, a double ring-shaped homohexamer of HslV is capped on each side by a ring-shaped HslU homohexamer. The assembly of the HslU/HslV complex is dependent on binding of ATP.

It localises to the cytoplasm. The catalysed reaction is ATP-dependent cleavage of peptide bonds with broad specificity.. Its activity is regulated as follows. Allosterically activated by HslU binding. In terms of biological role, protease subunit of a proteasome-like degradation complex believed to be a general protein degrading machinery. The polypeptide is ATP-dependent protease subunit HslV (Rhizobium johnstonii (strain DSM 114642 / LMG 32736 / 3841) (Rhizobium leguminosarum bv. viciae)).